Consider the following 166-residue polypeptide: Regulator of ribonuclease activity A (166 aa).

The protein belongs to the RraA family. In terms of assembly, homotrimer. Binds to both RNA-binding sites in the C-terminal region of Rne and to RhlB.

It is found in the cytoplasm. Its function is as follows. Globally modulates RNA abundance by binding to RNase E (Rne) and regulating its endonucleolytic activity. Can modulate Rne action in a substrate-dependent manner by altering the composition of the degradosome. Modulates RNA-binding and helicase activities of the degradosome. In Glaesserella parasuis serovar 5 (strain SH0165) (Haemophilus parasuis), this protein is Regulator of ribonuclease activity A.